The sequence spans 165 residues: Lipoprotein signal peptidase (165 aa).

Transmembrane regions (helical) follow at residues 9–29 (PFLWISAVAFFTDLITKLAVV), 65–85 (WQKYFFILLALVVSFMILFFL), and 97–119 (TGYALMVGGALANAADRAYHGFV). Residues Asp121 and Asp139 contribute to the active site. A helical transmembrane segment spans residues 134–154 (VFNIADVAICIGAGLLAIDAF).

It belongs to the peptidase A8 family.

The protein localises to the cell inner membrane. The catalysed reaction is Release of signal peptides from bacterial membrane prolipoproteins. Hydrolyzes -Xaa-Yaa-Zaa-|-(S,diacylglyceryl)Cys-, in which Xaa is hydrophobic (preferably Leu), and Yaa (Ala or Ser) and Zaa (Gly or Ala) have small, neutral side chains.. The protein operates within protein modification; lipoprotein biosynthesis (signal peptide cleavage). Its function is as follows. This protein specifically catalyzes the removal of signal peptides from prolipoproteins. This chain is Lipoprotein signal peptidase, found in Histophilus somni (strain 129Pt) (Haemophilus somnus).